A 209-amino-acid polypeptide reads, in one-letter code: Thiamine-phosphate synthase (209 aa).

Residues 36–40 (QLRDK) and Asn68 contribute to the 4-amino-2-methyl-5-(diphosphooxymethyl)pyrimidine site. 2 residues coordinate Mg(2+): Asp69 and Asp88. Ser107 lines the 4-amino-2-methyl-5-(diphosphooxymethyl)pyrimidine pocket. Residue 133–135 (TNS) coordinates 2-[(2R,5Z)-2-carboxy-4-methylthiazol-5(2H)-ylidene]ethyl phosphate. Lys136 is a binding site for 4-amino-2-methyl-5-(diphosphooxymethyl)pyrimidine. 2-[(2R,5Z)-2-carboxy-4-methylthiazol-5(2H)-ylidene]ethyl phosphate-binding positions include Gly164 and 184 to 185 (IT).

It belongs to the thiamine-phosphate synthase family. It depends on Mg(2+) as a cofactor.

The catalysed reaction is 2-[(2R,5Z)-2-carboxy-4-methylthiazol-5(2H)-ylidene]ethyl phosphate + 4-amino-2-methyl-5-(diphosphooxymethyl)pyrimidine + 2 H(+) = thiamine phosphate + CO2 + diphosphate. It catalyses the reaction 2-(2-carboxy-4-methylthiazol-5-yl)ethyl phosphate + 4-amino-2-methyl-5-(diphosphooxymethyl)pyrimidine + 2 H(+) = thiamine phosphate + CO2 + diphosphate. The enzyme catalyses 4-methyl-5-(2-phosphooxyethyl)-thiazole + 4-amino-2-methyl-5-(diphosphooxymethyl)pyrimidine + H(+) = thiamine phosphate + diphosphate. It participates in cofactor biosynthesis; thiamine diphosphate biosynthesis; thiamine phosphate from 4-amino-2-methyl-5-diphosphomethylpyrimidine and 4-methyl-5-(2-phosphoethyl)-thiazole: step 1/1. Its function is as follows. Condenses 4-methyl-5-(beta-hydroxyethyl)thiazole monophosphate (THZ-P) and 2-methyl-4-amino-5-hydroxymethyl pyrimidine pyrophosphate (HMP-PP) to form thiamine monophosphate (TMP). This chain is Thiamine-phosphate synthase, found in Shouchella clausii (strain KSM-K16) (Alkalihalobacillus clausii).